The primary structure comprises 204 residues: Recombination protein RecR (204 aa).

A C4-type zinc finger spans residues 58 to 75; that stretch reads CSVCQNITDLGVDPCHIC. Residues 83 to 181 enclose the Toprim domain; the sequence is SVICVVESPT…NVTRIARGIP (99 aa).

The protein belongs to the RecR family.

May play a role in DNA repair. It seems to be involved in an RecBC-independent recombinational process of DNA repair. It may act with RecF and RecO. This chain is Recombination protein RecR, found in Chlorobaculum tepidum (strain ATCC 49652 / DSM 12025 / NBRC 103806 / TLS) (Chlorobium tepidum).